Here is a 710-residue protein sequence, read N- to C-terminus: ARM REPEAT PROTEIN INTERACTING WITH ABF2 (710 aa).

The interval 1-35 (MDQQPERREGRSFPERKGQKRKLEEGAAAVEDREI) is disordered. ARM repeat units lie at residues 85-127 (EDLV…EKGS), 138-185 (PEYQ…NLAH), 188-227 (SSIK…TLAF), 230-269 (DDNK…NLVH), 272-311 (PHIK…QFAS), 314-353 (SDCK…RLAQ), 355-394 (AHNQ…GLAD), 429-468 (LKRL…HLCS), and 470-509 (EDQR…KLAN). The region spanning 541–608 (SDVTFLVEGR…IYTGSVDITN (68 aa)) is the BTB domain.

As to quaternary structure, interacts with ABF2. Interacts with DUF7/AIP1. Detected in embryos and most of the vegetative and reproductive organs.

It localises to the nucleus. The protein operates within protein modification; protein ubiquitination. Its function is as follows. May act as a substrate-specific adapter of an E3 ubiquitin-protein ligase complex (CUL3-RBX1-BTB) which mediates the ubiquitination and subsequent proteasomal degradation of target proteins. Acts as a positive regulator of ABA response via the modulation of the transcriptional activity of ABF2, a transcription factor which controls ABA-dependent gene expression via the G-box-type ABA-responsive elements. Negative regulator of seed germination and young seedling growth. The sequence is that of ARM REPEAT PROTEIN INTERACTING WITH ABF2 (ARIA) from Arabidopsis thaliana (Mouse-ear cress).